A 202-amino-acid polypeptide reads, in one-letter code: Neuroligin-3 (202 aa).

At 1–202 (RYGSPTYFYA…TGTRMQGHSW (202 aa)) the chain is on the extracellular side. Cys-15 and Cys-49 are oxidised to a cystine. A glycan (N-linked (GlcNAc...) asparagine) is linked at Asn-50. The segment at 154–202 (LRIPPTAPTSPAGPMARPGAPSGQPSHLPTATRMPRGPGTGTRMQGHSW) is disordered.

This sequence belongs to the type-B carboxylesterase/lipase family. As to quaternary structure, homodimer, and heterodimer with NLGN1 and NLGN2. Interacts with neurexins NRXN1, NRXN2 and NRXN3. Interaction with neurexins is mediated by heparan sulfate glycan modification on neurexin. Interacts (via its C-terminus) with DLG4/PSD-95 (via PDZ domain 3).

It localises to the cell membrane. It is found in the synapse. Cell surface protein involved in cell-cell-interactions via its interactions with neurexin family members. Plays a role in synapse function and synaptic signal transmission, and probably mediates its effects by recruiting and clustering other synaptic proteins. May promote the initial formation of synapses, but is not essential for this. May also play a role in glia-glia or glia-neuron interactions in the developing peripheral nervous system. The sequence is that of Neuroligin-3 (NLGN3) from Macaca mulatta (Rhesus macaque).